The chain runs to 310 residues: L-lactate dehydrogenase (310 aa).

NAD(+)-binding positions include V11, D32, Y62, and 76-77 (GV). Substrate contacts are provided by residues Q79, R85, and 117 to 120 (NPVD). NAD(+) is bound by residues 115–117 (ASN) and S140. 145–148 (DTAR) is a substrate binding site. The beta-D-fructose 1,6-bisphosphate site is built by R150 and H165. H172 serves as the catalytic Proton acceptor. T227 provides a ligand contact to substrate.

The protein belongs to the LDH/MDH superfamily. LDH family. In terms of assembly, homotetramer.

The protein resides in the cytoplasm. It carries out the reaction (S)-lactate + NAD(+) = pyruvate + NADH + H(+). It participates in fermentation; pyruvate fermentation to lactate; (S)-lactate from pyruvate: step 1/1. Its activity is regulated as follows. Allosterically activated by fructose 1,6-bisphosphate (FBP). Catalyzes the conversion of lactate to pyruvate. The chain is L-lactate dehydrogenase from Allorhizobium ampelinum (strain ATCC BAA-846 / DSM 112012 / S4) (Agrobacterium vitis (strain S4)).